A 101-amino-acid chain; its full sequence is Acylphosphatase (101 aa).

Residues 15-101 (RMYARVYGLV…KGEFEDFETY (87 aa)) enclose the Acylphosphatase-like domain. Catalysis depends on residues Arg-30 and Asn-48.

The protein belongs to the acylphosphatase family.

It carries out the reaction an acyl phosphate + H2O = a carboxylate + phosphate + H(+). The protein is Acylphosphatase (acyP) of Saccharolobus solfataricus (strain ATCC 35092 / DSM 1617 / JCM 11322 / P2) (Sulfolobus solfataricus).